Reading from the N-terminus, the 132-residue chain is uncharacterized protein (132 aa).

It to M.jannaschii MJ0661.

This is an uncharacterized protein from Helicobacter pylori (strain J99 / ATCC 700824) (Campylobacter pylori J99).